The following is a 118-amino-acid chain: MGKFKLGNWAAMIGMAACWCLIAGGIMGIWYERRYIAIYSICVGGVLYPLLYPLSFLGPLKAIFHQYYVAAALMAGLSVLCYFLVPTMLAAMVMDISAVVFLISAIKGERGDFFDKQD.

Helical transmembrane passes span tryptophan 9–isoleucine 29, isoleucine 36–phenylalanine 56, alanine 62–tyrosine 82, and phenylalanine 83–isoleucine 103.

It belongs to the p22phox family. In terms of assembly, composed of a heavy chain and a light chain.

The protein localises to the cell membrane. Critical component of the membrane-bound oxidase of phagocytes that generates superoxide. This is Superoxide-generating NADPH oxidase light chain subunit (cybA) from Dictyostelium discoideum (Social amoeba).